A 305-amino-acid chain; its full sequence is Coenzyme PQQ synthesis protein B (305 aa).

It belongs to the PqqB family.

It participates in cofactor biosynthesis; pyrroloquinoline quinone biosynthesis. May be involved in the transport of PQQ or its precursor to the periplasm. The polypeptide is Coenzyme PQQ synthesis protein B (Cupriavidus necator (strain ATCC 17699 / DSM 428 / KCTC 22496 / NCIMB 10442 / H16 / Stanier 337) (Ralstonia eutropha)).